A 131-amino-acid chain; its full sequence is Global transcriptional regulator Spx (131 aa).

Cys10 and Cys13 are joined by a disulfide.

It belongs to the ArsC family. Spx subfamily. Interacts with the C-terminal domain of the alpha subunit of the RNAP.

The protein localises to the cytoplasm. With respect to regulation, under non-stress conditions, Spx is degraded by ClpXP. Efficient degradation by ClpXP requires the adapter protein SpxH/YjbH. Function, levels and solubility of Spx are affected by SpxH/YjbH aggregation and stress conditions. Global transcriptional regulator that plays a key role in stress response and exerts either positive or negative regulation of genes. Acts by interacting with the C-terminal domain of the alpha subunit of the RNA polymerase (RNAP). This interaction can enhance binding of RNAP to the promoter region of target genes and stimulate their transcription, or block interaction of RNAP with activator proteins and repress transcription. In terms of biological role, required for transcription of thioredoxin reductase (trxB). Modulates the expression of icaR, encoding a repressor of the biofilm operon icaADBC. Also controls the transcription of trfA, a gene implicated in cell wall antibiotic resistance, which in turn is required for degradation of MazE antitoxin, the unstable component of the MazEF toxin-antitoxin system, that neutralizes the endoribonuclease activity of MazF toxin. The chain is Global transcriptional regulator Spx from Staphylococcus aureus (strain NCTC 8325 / PS 47).